The chain runs to 356 residues: UDP-N-acetylglucosamine--N-acetylmuramyl-(pentapeptide) pyrophosphoryl-undecaprenol N-acetylglucosamine transferase (356 aa).

UDP-N-acetyl-alpha-D-glucosamine is bound by residues 12–14, asparagine 124, arginine 163, serine 188, isoleucine 242, 261–266, and glutamine 287; these read TGG and ALTVSE.

This sequence belongs to the glycosyltransferase 28 family. MurG subfamily.

The protein resides in the cell inner membrane. It carries out the reaction di-trans,octa-cis-undecaprenyl diphospho-N-acetyl-alpha-D-muramoyl-L-alanyl-D-glutamyl-meso-2,6-diaminopimeloyl-D-alanyl-D-alanine + UDP-N-acetyl-alpha-D-glucosamine = di-trans,octa-cis-undecaprenyl diphospho-[N-acetyl-alpha-D-glucosaminyl-(1-&gt;4)]-N-acetyl-alpha-D-muramoyl-L-alanyl-D-glutamyl-meso-2,6-diaminopimeloyl-D-alanyl-D-alanine + UDP + H(+). Its pathway is cell wall biogenesis; peptidoglycan biosynthesis. Cell wall formation. Catalyzes the transfer of a GlcNAc subunit on undecaprenyl-pyrophosphoryl-MurNAc-pentapeptide (lipid intermediate I) to form undecaprenyl-pyrophosphoryl-MurNAc-(pentapeptide)GlcNAc (lipid intermediate II). In Ectopseudomonas mendocina (strain ymp) (Pseudomonas mendocina), this protein is UDP-N-acetylglucosamine--N-acetylmuramyl-(pentapeptide) pyrophosphoryl-undecaprenol N-acetylglucosamine transferase.